The sequence spans 398 residues: MKVFIVIMIIVVIFFALILLDIFMGRAGYRKKAYEPVFSKKKSDIELIHCGADLVERMMNDIRQAASSVHMMFFIMKNDEVSHNMYTLLKTKAQAGVSVYLLLDWAGCRAIKKTALQTMKNAGVHVHVMNRPRFPFFFFHMQKRNHRKITVIDGKIGYIGGFNIAEEYLGKKAKFGNWEDYHLRMIGEGVHDLQTLFASDLKRNTGIELGSDVWPKLQQGTISHKIYATDGYSLENIYLANIAQAKNRLTVCTPYYIPSKPLQEALINARKNGVSVRIIVPMKSDHPLVREAAFTYYSELLDAGCLIYRYYQGFYHVKALIIDDHLSIIGTANFDKRSLFLNEEVNVEIDDEAFTSEVYATIEEDMKKSELLTMEDFSKRTFRQRPAEWLGRALSYFL.

A helical transmembrane segment spans residues valine 3–phenylalanine 23. PLD phosphodiesterase domains lie at methionine 141 to tyrosine 168 and tyrosine 311 to serine 338.

The protein belongs to the phospholipase D family. Cardiolipin synthase subfamily.

Its subcellular location is the cell membrane. Functionally, involved in the biosynthesis of cardiolipin. The protein is Minor cardiolipin synthase ClsB (clsB) of Bacillus subtilis (strain 168).